The following is a 472-amino-acid chain: Transcriptional activator protein rec16 (472 aa).

The C2H2-type zinc finger occupies 420 to 444; the sequence is FICCYCTKPFLSISKLQEHESSCSH.

The protein localises to the nucleus. Functionally, transcriptional activator that controls the onset of premeiotic DNA synthesis by regulating res2 and some other factor(s) in a mei2 independent cascade. The chain is Transcriptional activator protein rec16 (rec16) from Schizosaccharomyces pombe (strain 972 / ATCC 24843) (Fission yeast).